Reading from the N-terminus, the 313-residue chain is MSVNLKGRSLLTLLDFSPEEIRYLLDISKQVKMENRSKLRTERFKGMTLAMIFEKRSTRTRLAFETAFAEEGGHPIFLSPNDIHLGAKESLEDTARVLGRMVDAIMFRGYKQETVEKLAEYSGVPVYNGLTDEFHPTQALADLMTIEENFGRLKGVKVVFMGDTRNNVATSLMIACAKMGMNFVACGPEELKPRSDVFKRCQEIVKETDGSVSFTSNLEEALAGADVVYTDVWASMGEEDKEKERMALLKPYQVNERVMEMTGKSETIFMHCLPAVKGQEVTYEVIEGKQSRVWDEAENRKHTIKAVMIATLL.

Carbamoyl phosphate contacts are provided by residues 57–60, R108, and 135–138; these read STRT and HPTQ. Residues N167, D231, and 235-236 contribute to the L-ornithine site; that span reads SM. Carbamoyl phosphate is bound by residues 272 to 273 and R300; that span reads CL.

It belongs to the aspartate/ornithine carbamoyltransferase superfamily. OTCase family.

It is found in the cytoplasm. It catalyses the reaction carbamoyl phosphate + L-ornithine = L-citrulline + phosphate + H(+). It participates in amino-acid biosynthesis; L-arginine biosynthesis; L-arginine from L-ornithine and carbamoyl phosphate: step 1/3. Its function is as follows. Reversibly catalyzes the transfer of the carbamoyl group from carbamoyl phosphate (CP) to the N(epsilon) atom of ornithine (ORN) to produce L-citrulline. This Thermotoga maritima (strain ATCC 43589 / DSM 3109 / JCM 10099 / NBRC 100826 / MSB8) protein is Ornithine carbamoyltransferase.